A 187-amino-acid polypeptide reads, in one-letter code: Elongation factor P (187 aa).

The protein belongs to the elongation factor P family.

The protein resides in the cytoplasm. The protein operates within protein biosynthesis; polypeptide chain elongation. In terms of biological role, involved in peptide bond synthesis. Stimulates efficient translation and peptide-bond synthesis on native or reconstituted 70S ribosomes in vitro. Probably functions indirectly by altering the affinity of the ribosome for aminoacyl-tRNA, thus increasing their reactivity as acceptors for peptidyl transferase. This is Elongation factor P from Parasynechococcus marenigrum (strain WH8102).